We begin with the raw amino-acid sequence, 473 residues long: Arginine biosynthesis bifunctional protein ArgJ, mitochondrial (473 aa).

Thr201, Lys230, Thr241, Glu328, Asn468, and Thr473 together coordinate substrate. The active-site Nucleophile is the Thr241.

It belongs to the ArgJ family. In terms of assembly, heterodimer of an alpha and a beta chain. In terms of processing, the alpha and beta chains are autoproteolytically processed from a single precursor protein within the mitochondrion.

Its subcellular location is the mitochondrion matrix. The enzyme catalyses N(2)-acetyl-L-ornithine + L-glutamate = N-acetyl-L-glutamate + L-ornithine. It catalyses the reaction L-glutamate + acetyl-CoA = N-acetyl-L-glutamate + CoA + H(+). Its pathway is amino-acid biosynthesis; L-arginine biosynthesis; L-ornithine and N-acetyl-L-glutamate from L-glutamate and N(2)-acetyl-L-ornithine (cyclic): step 1/1. It participates in amino-acid biosynthesis; L-arginine biosynthesis; N(2)-acetyl-L-ornithine from L-glutamate: step 1/4. Functionally, catalyzes two activities which are involved in the cyclic version of arginine biosynthesis: the synthesis of acetylglutamate from glutamate and acetyl-CoA, and of ornithine by transacetylation between acetylornithine and glutamate. This chain is Arginine biosynthesis bifunctional protein ArgJ, mitochondrial, found in Blastomyces gilchristii (strain SLH14081) (Blastomyces dermatitidis).